We begin with the raw amino-acid sequence, 116 residues long: Peptidyl-tRNA hydrolase (116 aa).

The protein belongs to the PTH2 family.

It localises to the cytoplasm. The catalysed reaction is an N-acyl-L-alpha-aminoacyl-tRNA + H2O = an N-acyl-L-amino acid + a tRNA + H(+). In terms of biological role, the natural substrate for this enzyme may be peptidyl-tRNAs which drop off the ribosome during protein synthesis. In Methanopyrus kandleri (strain AV19 / DSM 6324 / JCM 9639 / NBRC 100938), this protein is Peptidyl-tRNA hydrolase.